The chain runs to 409 residues: Glutamyl-tRNA reductase (409 aa).

Residues 46–49, Ser88, 93–95, and Gln99 each bind substrate; these read TCNR and ENE. The active-site Nucleophile is Cys47. 164–169 provides a ligand contact to NADP(+); that stretch reads GNGMIA.

Belongs to the glutamyl-tRNA reductase family. In terms of assembly, homodimer.

It carries out the reaction (S)-4-amino-5-oxopentanoate + tRNA(Glu) + NADP(+) = L-glutamyl-tRNA(Glu) + NADPH + H(+). Its pathway is porphyrin-containing compound metabolism; protoporphyrin-IX biosynthesis; 5-aminolevulinate from L-glutamyl-tRNA(Glu): step 1/2. Functionally, catalyzes the NADPH-dependent reduction of glutamyl-tRNA(Glu) to glutamate 1-semialdehyde (GSA). The protein is Glutamyl-tRNA reductase of Thermoplasma acidophilum (strain ATCC 25905 / DSM 1728 / JCM 9062 / NBRC 15155 / AMRC-C165).